A 585-amino-acid polypeptide reads, in one-letter code: Squalene epoxidase 2, mitochondrial (585 aa).

The transit peptide at 1-45 (MKPFVIRNLPRFQSTLRSSLLYTNHRPSSRFSLSTRRFTTGATYI) directs the protein to the mitochondrion. Residues 70 to 90 (AKIALDQFIASLFTFLLLYIL) traverse the membrane as a helical segment. FAD contacts are provided by residues 132–133 (VA), 152–153 (ER), R160, R231, V247, D409, and M422. 3 helical membrane-spanning segments follow: residues 493–513 (FDYL…LSGL), 520–540 (LVLH…LPFP), and 545–565 (FWLG…IIKA).

The protein belongs to the squalene monooxygenase family. Requires FAD as cofactor. In terms of tissue distribution, expressed mainly in inflorescences. Detected in seedlings, leaves, stems, and siliques.

The protein resides in the mitochondrion membrane. It catalyses the reaction squalene + reduced [NADPH--hemoprotein reductase] + O2 = (S)-2,3-epoxysqualene + oxidized [NADPH--hemoprotein reductase] + H2O + H(+). Its pathway is terpene metabolism; lanosterol biosynthesis; lanosterol from farnesyl diphosphate: step 2/3. Functionally, catalyzes the stereospecific oxidation of squalene to (S)-2,3-epoxysqualene, and is considered to be a rate-limiting enzyme in steroid biosynthesis. Produces primarily oxidosqualene. This Arabidopsis thaliana (Mouse-ear cress) protein is Squalene epoxidase 2, mitochondrial (SQE2).